The following is a 467-amino-acid chain: Coiled-coil domain-containing protein 71 (467 aa).

Residues 81 to 105 (PSQTKLQARAPNPTATSPPASAPRT) form a disordered region. Residues 88 to 105 (ARAPNPTATSPPASAPRT) show a composition bias toward low complexity. Phosphoserine is present on Ser-129. 2 disordered regions span residues 211–280 (KLRK…GTKT) and 349–416 (VRAK…KAWL). Positions 253–265 (GHQSKTNRATGSP) are enriched in polar residues. Residues 279–359 (KTAQAKVART…RAKAKVARTQ (81 aa)) adopt a coiled-coil conformation. Over residues 349–380 (VRAKAKVARTQPRGRGRPKGSAKARTTRKGQK) the composition is skewed to basic residues. The span at 392 to 401 (RAEEAKDLPP) shows a compositional bias: basic and acidic residues.

This Homo sapiens (Human) protein is Coiled-coil domain-containing protein 71 (CCDC71).